Here is a 255-residue protein sequence, read N- to C-terminus: Taurine import ATP-binding protein TauB (255 aa).

Positions 2–229 (LNVSGLWAEY…RYAEGEPCRA (228 aa)) constitute an ABC transporter domain. 34 to 41 (GPSGCGKT) lines the ATP pocket.

The protein belongs to the ABC transporter superfamily. Taurine importer (TC 3.A.1.17.1) family. As to quaternary structure, the complex is composed of two ATP-binding proteins (TauB), two transmembrane proteins (TauC) and a solute-binding protein (TauA).

It is found in the cell inner membrane. The catalysed reaction is taurine(out) + ATP + H2O = taurine(in) + ADP + phosphate + H(+). Part of the ABC transporter complex TauABC involved in taurine import. Responsible for energy coupling to the transport system. The polypeptide is Taurine import ATP-binding protein TauB (Yersinia pestis bv. Antiqua (strain Antiqua)).